Here is a 440-residue protein sequence, read N- to C-terminus: R3H and coiled-coil domain-containing protein 1 (440 aa).

The region spanning 16-81 (NDFVHRIQEE…KRRTVICHQD (66 aa)) is the R3H domain. Positions 154-225 (TSVLKREAPA…LGPESQSGKG (72 aa)) are disordered. Positions 157 to 168 (LKREAPAGRDPE) are enriched in basic and acidic residues. Ser236 is subject to Phosphoserine. Residues 242 to 300 (LEKGKESLLEKRLVAEEEEDEEEVEEDGPSSCSEDDYSELLQEITDNLTKKEIQIEKIH) are a coiled coil. Residues 254 to 276 (LVAEEEEDEEEVEEDGPSSCSED) form a disordered region. The segment covering 257–276 (EEEEDEEEVEEDGPSSCSED) has biased composition (acidic residues).

The chain is R3H and coiled-coil domain-containing protein 1 from Homo sapiens (Human).